A 1371-amino-acid polypeptide reads, in one-letter code: Soluble scavenger receptor cysteine-rich domain-containing protein SSC5D (1371 aa).

A signal peptide spans 1-16 (MRGLACLLAMLVGIQA). The SRCR 1 domain occupies 20-120 (LRLADGPHGC…HEEDAGVVCV (101 aa)). 3 cysteine pairs are disulfide-bonded: Cys45/Cys109, Cys58/Cys119, and Cys89/Cys99. A compositionally biased stretch (low complexity) spans 143-154 (LSGELSPSSEEP). Residues 143–200 (LSGELSPSSEEPPITHAPQPAASSQNGPRKKNPRPPKQTKSTRAPVLTNGAPHQERLR) are disordered. 2 SRCR domains span residues 199-299 (LRLV…LVCT) and 305-405 (IRLA…AVCD). 6 disulfide bridges follow: Cys224–Cys288, Cys237–Cys298, Cys268–Cys278, Cys330–Cys394, Cys343–Cys404, and Cys374–Cys384. Residues Asn377 and Asn422 are each glycosylated (N-linked (GlcNAc...) asparagine). The interval 431 to 466 (TSVGQMPGPAGPWPPSASPTAPPEPGPEAGSPQLRL) is disordered. Over residues 439-456 (PAGPWPPSASPTAPPEPG) the composition is skewed to pro residues. In terms of domain architecture, SRCR 4 spans 464–565 (LRLVAGPSRC…HNEDVGVTCT (102 aa)). Cystine bridges form between Cys489–Cys554, Cys502–Cys564, and Cys534–Cys544. The segment at 592–756 (WLPGELTTKP…AGVPVPSGPF (165 aa)) is disordered. A compositionally biased stretch (polar residues) spans 599-611 (TKPSASLTSSVPQ). Residues 622–633 (KSTKKWVTKNAR) show a composition bias toward basic residues. A compositionally biased stretch (polar residues) spans 653–663 (TPTSLHPTART). Residues 665–676 (ELPKRLTTEAPH) show a composition bias toward basic and acidic residues. Residues 698 to 740 (PVVSQSTQGPQEVTSEATTTENPQTSLEPSGENTEGSLESSQD) are compositionally biased toward polar residues. Over residues 741–755 (PATTPTAGVPVPSGP) the composition is skewed to low complexity. An SRCR 5 domain is found at 758 to 858 (VRLADGPNRC…HEEDVVLTCT (101 aa)). Intrachain disulfides connect Cys783-Cys847, Cys796-Cys857, and Cys827-Cys837. Disordered regions lie at residues 888–1270 (RPGH…PFGP) and 1351–1371 (STPV…RGDV). Residues 894-912 (SWATTTNTEVPSPATQNLP) show a composition bias toward polar residues. Composition is skewed to low complexity over residues 936–957 (KGTP…KSPG), 981–1004 (PTSA…RQTS), and 1018–1035 (GTSS…LPSP). Composition is skewed to polar residues over residues 1039-1086 (ALST…TSEL) and 1102-1148 (SSDS…NPQQ). 2 N-linked (GlcNAc...) asparagine glycosylation sites follow: Asn1044 and Asn1131. The segment covering 1149-1163 (PRSPHPATSPQPPTN) has biased composition (pro residues). Positions 1164–1189 (THPSSTPATPTESLPSSRKTELSSPT) are enriched in polar residues. Positions 1218–1230 (ASESGPSSPSPAS) are enriched in low complexity. Over residues 1244 to 1261 (RSQTLHSASDHLTQGPTP) the composition is skewed to polar residues.

As to quaternary structure, interacts with LGALS1 and laminin. In terms of processing, partially N- and O-glycosylated. In terms of tissue distribution, detected throughout the gastrointestinal and genitourinary tracts, in serosal salivary gland, the exocrine part of pancreas and testis, as well as in a few tubular structures in kidney. Not detected in lung and heart (at protein level). Strongly expressed in testis, kidney and pancreas, with lower levels detected in bone marrow, spleen, lung, liver, colon, stomach and skeletal muscle. Very low levels or no expression detected in thymus, esophagus, jejunum, ileum, duodenum, ovary, uterus, heart, trachea, brain, cerebellum and bladder.

It localises to the secreted. The protein resides in the cytoplasm. In terms of biological role, binds to extracellular matrix proteins. Binds to pathogen-associated molecular patterns (PAMPs) present on the cell walls of Gram-positive and Gram-negative bacteria and fungi, behaving as a pattern recognition receptor (PRR). Induces bacterial and fungal aggregation and subsequent inhibition of PAMP-induced cytokine release. Does not possess intrinsic bactericidal activity. May play a role in the innate defense and homeostasis of certain epithelial surfaces. This is Soluble scavenger receptor cysteine-rich domain-containing protein SSC5D (Ssc5d) from Mus musculus (Mouse).